Consider the following 247-residue polypeptide: Adenosine 5'-phosphosulfate reductase (247 aa).

The [4Fe-4S] cluster site is built by cysteine 133, cysteine 134, cysteine 216, and cysteine 219. Positions 222–247 (KPAPGSDPRSGRWAGQAKTECGLHAS) are disordered. Cysteine 242 acts as the Nucleophile; cysteine thiosulfonate intermediate in catalysis.

Belongs to the PAPS reductase family. CysH subfamily. [4Fe-4S] cluster serves as cofactor.

The protein localises to the cytoplasm. It catalyses the reaction [thioredoxin]-disulfide + sulfite + AMP + 2 H(+) = adenosine 5'-phosphosulfate + [thioredoxin]-dithiol. It participates in sulfur metabolism; hydrogen sulfide biosynthesis; sulfite from sulfate. Its function is as follows. Catalyzes the formation of sulfite from adenosine 5'-phosphosulfate (APS) using thioredoxin as an electron donor. In Rhodococcus opacus (strain B4), this protein is Adenosine 5'-phosphosulfate reductase.